The sequence spans 146 residues: D-aminoacyl-tRNA deacylase (146 aa).

The short motif at 138-139 (GP) is the Gly-cisPro motif, important for rejection of L-amino acids element.

This sequence belongs to the DTD family. In terms of assembly, homodimer.

It localises to the cytoplasm. The enzyme catalyses glycyl-tRNA(Ala) + H2O = tRNA(Ala) + glycine + H(+). It catalyses the reaction a D-aminoacyl-tRNA + H2O = a tRNA + a D-alpha-amino acid + H(+). Functionally, an aminoacyl-tRNA editing enzyme that deacylates mischarged D-aminoacyl-tRNAs. Also deacylates mischarged glycyl-tRNA(Ala), protecting cells against glycine mischarging by AlaRS. Acts via tRNA-based rather than protein-based catalysis; rejects L-amino acids rather than detecting D-amino acids in the active site. By recycling D-aminoacyl-tRNA to D-amino acids and free tRNA molecules, this enzyme counteracts the toxicity associated with the formation of D-aminoacyl-tRNA entities in vivo and helps enforce protein L-homochirality. This Tolumonas auensis (strain DSM 9187 / NBRC 110442 / TA 4) protein is D-aminoacyl-tRNA deacylase.